The primary structure comprises 133 residues: ATP synthase epsilon chain (133 aa).

Belongs to the ATPase epsilon chain family. F-type ATPases have 2 components, CF(1) - the catalytic core - and CF(0) - the membrane proton channel. CF(1) has five subunits: alpha(3), beta(3), gamma(1), delta(1), epsilon(1). CF(0) has three main subunits: a, b and c.

It localises to the cell membrane. Produces ATP from ADP in the presence of a proton gradient across the membrane. This Clostridium acetobutylicum (strain ATCC 824 / DSM 792 / JCM 1419 / IAM 19013 / LMG 5710 / NBRC 13948 / NRRL B-527 / VKM B-1787 / 2291 / W) protein is ATP synthase epsilon chain (atpC).